The following is a 225-amino-acid chain: Peptidyl-prolyl cis-trans isomerase D (225 aa).

The signal sequence occupies residues 1–22; it reads MKLQFFSFITLFACLFTTAIFA. Positions 37–195 constitute a PPIase cyclophilin-type domain; it reads YFDINHGDKQ…KEVIIVESGE (159 aa). Asn139 is a glycosylation site (N-linked (GlcNAc...) asparagine). Residues 222–225 carry the Prevents secretion from ER motif; the sequence is HDEL.

The protein belongs to the cyclophilin-type PPIase family. PPIase B subfamily.

The protein localises to the endoplasmic reticulum lumen. The enzyme catalyses [protein]-peptidylproline (omega=180) = [protein]-peptidylproline (omega=0). In terms of biological role, PPIases accelerate the folding of proteins. It catalyzes the cis-trans isomerization of proline imidic peptide bonds in oligopeptides. This Saccharomyces cerevisiae (strain ATCC 204508 / S288c) (Baker's yeast) protein is Peptidyl-prolyl cis-trans isomerase D.